The chain runs to 236 residues: 2,3,4,5-tetrahydropyridine-2,6-dicarboxylate N-acetyltransferase (236 aa).

The protein belongs to the transferase hexapeptide repeat family. DapH subfamily.

The enzyme catalyses (S)-2,3,4,5-tetrahydrodipicolinate + acetyl-CoA + H2O = L-2-acetamido-6-oxoheptanedioate + CoA. The protein operates within amino-acid biosynthesis; L-lysine biosynthesis via DAP pathway; LL-2,6-diaminopimelate from (S)-tetrahydrodipicolinate (acetylase route): step 1/3. In terms of biological role, catalyzes the transfer of an acetyl group from acetyl-CoA to tetrahydrodipicolinate. The chain is 2,3,4,5-tetrahydropyridine-2,6-dicarboxylate N-acetyltransferase from Thermotoga maritima (strain ATCC 43589 / DSM 3109 / JCM 10099 / NBRC 100826 / MSB8).